The sequence spans 73 residues: Probable minor pilin MMP0528 (73 aa).

Positions 1–10 (MLKKLYSKKG) are excised as a propeptide. The QXSXEXXXL motif lies at 11–19 (QVSMEMGIL).

In terms of processing, the N-terminus is probably cleaved by the prepilin peptidase EppA, which recognizes the class III signal sequence.

The protein localises to the secreted. The protein resides in the cell surface. Its subcellular location is the fimbrium. The chain is Probable minor pilin MMP0528 from Methanococcus maripaludis (strain DSM 14266 / JCM 13030 / NBRC 101832 / S2 / LL).